The sequence spans 463 residues: Elongation factor 1-alpha (463 aa).

Gly-2 is modified (n,N,N-trimethylglycine). The residue at position 3 (Lys-3) is an N6,N6-dimethyllysine; alternate. Position 3 is an N6-methyllysine; alternate (Lys-3). One can recognise a tr-type G domain in the interval 5–239; it reads KNHVNVVVIG…DAIEPPSRPT (235 aa). A G1 region spans residues 14-21; that stretch reads GHVDSGKS. 14 to 21 contacts GTP; the sequence is GHVDSGKS. Lys-30 bears the N6-methyllysine mark. The segment at 70-74 is G2; that stretch reads GITID. Residue Lys-79 is modified to N6,N6,N6-trimethyllysine. Residues 91–94 form a G3 region; sequence DAPG. Residues 91–95 and 153–156 contribute to the GTP site; these read DAPGH and NKMD. Residues 153–156 are G4; it reads NKMD. The G5 stretch occupies residues 191–193; sequence SGW. Lys-315 carries the N6,N6-dimethyllysine; alternate modification. N6-methyllysine; alternate is present on Lys-315. The residue at position 389 (Lys-389) is an N6-methyllysine.

This sequence belongs to the TRAFAC class translation factor GTPase superfamily. Classic translation factor GTPase family. EF-Tu/EF-1A subfamily.

It localises to the cytoplasm. In terms of biological role, this protein promotes the GTP-dependent binding of aminoacyl-tRNA to the A-site of ribosomes during protein biosynthesis. The chain is Elongation factor 1-alpha (TEF) from Puccinia graminis (Black stem rust fungus).